A 145-amino-acid chain; its full sequence is Peptide methionine sulfoxide reductase MsrB (145 aa).

Residues 4 to 127 enclose the MsrB domain; sequence SDELKQRIGE…NSAALKFIPY (124 aa). The active-site Nucleophile is the Cys-116.

It belongs to the MsrB Met sulfoxide reductase family.

It carries out the reaction L-methionyl-[protein] + [thioredoxin]-disulfide + H2O = L-methionyl-(R)-S-oxide-[protein] + [thioredoxin]-dithiol. The protein is Peptide methionine sulfoxide reductase MsrB of Streptococcus pyogenes serotype M3 (strain ATCC BAA-595 / MGAS315).